Reading from the N-terminus, the 62-residue chain is Photosystem II reaction center protein Z (62 aa).

The next 2 membrane-spanning stretches (helical) occupy residues 8-28 (TLFA…VVFA) and 41-61 (LSGL…NSFV).

This sequence belongs to the PsbZ family. As to quaternary structure, PSII is composed of 1 copy each of membrane proteins PsbA, PsbB, PsbC, PsbD, PsbE, PsbF, PsbH, PsbI, PsbJ, PsbK, PsbL, PsbM, PsbT, PsbY, PsbZ, Psb30/Ycf12, at least 3 peripheral proteins of the oxygen-evolving complex and a large number of cofactors. It forms dimeric complexes.

Its subcellular location is the plastid. The protein localises to the chloroplast thylakoid membrane. In terms of biological role, may control the interaction of photosystem II (PSII) cores with the light-harvesting antenna, regulates electron flow through the 2 photosystem reaction centers. PSII is a light-driven water plastoquinone oxidoreductase, using light energy to abstract electrons from H(2)O, generating a proton gradient subsequently used for ATP formation. This is Photosystem II reaction center protein Z from Stigeoclonium helveticum (Green alga).